Here is a 467-residue protein sequence, read N- to C-terminus: Mitochondrial distribution and morphology protein 10 (467 aa).

It belongs to the MDM10 family. As to quaternary structure, component of the ER-mitochondria encounter structure (ERMES) or MDM complex, composed of MMM1, MDM10, MDM12 and MDM34. Associates with the mitochondrial outer membrane sorting assembly machinery SAM(core) complex.

It localises to the mitochondrion outer membrane. Component of the ERMES/MDM complex, which serves as a molecular tether to connect the endoplasmic reticulum and mitochondria. Components of this complex are involved in the control of mitochondrial shape and protein biogenesis and may function in phospholipid exchange. MDM10 is involved in the late assembly steps of the general translocase of the mitochondrial outer membrane (TOM complex). Functions in the TOM40-specific route of the assembly of outer membrane beta-barrel proteins, including the association of TOM40 with the receptor TOM22 and small TOM proteins. Can associate with the SAM(core) complex as well as the MDM12-MMM1 complex, both involved in late steps of the major beta-barrel assembly pathway, that is responsible for biogenesis of all outer membrane beta-barrel proteins. May act as a switch that shuttles between both complexes and channels precursor proteins into the TOM40-specific pathway. Plays a role in mitochondrial morphology and in the inheritance of mitochondria. This is Mitochondrial distribution and morphology protein 10 from Ajellomyces capsulatus (strain G186AR / H82 / ATCC MYA-2454 / RMSCC 2432) (Darling's disease fungus).